We begin with the raw amino-acid sequence, 134 residues long: Large ribosomal subunit protein bL17 (134 aa).

It belongs to the bacterial ribosomal protein bL17 family. Part of the 50S ribosomal subunit. Contacts protein L32.

The chain is Large ribosomal subunit protein bL17 from Thioalkalivibrio sulfidiphilus (strain HL-EbGR7).